We begin with the raw amino-acid sequence, 584 residues long: Phenylalanine--tRNA ligase beta subunit (584 aa).

The B5 domain maps to 290-369 (FSVRTKTVTH…RALGFNSLEP (80 aa)). Residues D347, D353, D356, and D357 each contribute to the Mg(2+) site.

Belongs to the phenylalanyl-tRNA synthetase beta subunit family. Type 2 subfamily. As to quaternary structure, tetramer of two alpha and two beta subunits. It depends on Mg(2+) as a cofactor.

It localises to the cytoplasm. It catalyses the reaction tRNA(Phe) + L-phenylalanine + ATP = L-phenylalanyl-tRNA(Phe) + AMP + diphosphate + H(+). This is Phenylalanine--tRNA ligase beta subunit from Haloarcula marismortui (strain ATCC 43049 / DSM 3752 / JCM 8966 / VKM B-1809) (Halobacterium marismortui).